We begin with the raw amino-acid sequence, 282 residues long: Probable endonuclease 4 (282 aa).

Positions 69, 109, 145, 179, 182, 216, 229, 231, and 261 each coordinate Zn(2+).

It belongs to the AP endonuclease 2 family. Zn(2+) is required as a cofactor.

It carries out the reaction Endonucleolytic cleavage to 5'-phosphooligonucleotide end-products.. Endonuclease IV plays a role in DNA repair. It cleaves phosphodiester bonds at apurinic or apyrimidinic (AP) sites, generating a 3'-hydroxyl group and a 5'-terminal sugar phosphate. This chain is Probable endonuclease 4, found in Edwardsiella ictaluri (strain 93-146).